A 275-amino-acid polypeptide reads, in one-letter code: Methylglyoxal reductase DkgA (275 aa).

The active-site Proton donor is Y51. H107 is a substrate binding site. 187–241 (SPLAQGGKGVFDQKVIRDLADKYGKTPAQIVIRWHLDSGLVVIPKSVTPSRIAEN) serves as a coordination point for NADP(+).

Belongs to the aldo/keto reductase family. As to quaternary structure, monomer.

It is found in the cytoplasm. The catalysed reaction is hydroxyacetone + NADP(+) = methylglyoxal + NADPH + H(+). It catalyses the reaction a primary alcohol + NADP(+) = an aldehyde + NADPH + H(+). It carries out the reaction 2-dehydro-L-idonate + NADP(+) = 2,5-didehydro-D-gluconate + NADPH + H(+). Its function is as follows. Aldo-keto reductase that significantly contributes to cellular methylglyoxal detoxification by catalyzing the NADPH-dependent conversion of methylglyoxal to acetol. It also exhibits fairly high activity with glyoxal. Shows broad specificity and can use aromatic aldehydes such as 4-nitrobenzaldehyde, 3-nitrobenzaldehyde and benzaldehyde, and phenylglyoxal. Shows beta-keto ester reductase activity toward ethyl acetoacetate and a variety of 2-substituted derivatives. Also catalyzes the reduction of 2,5-diketo-D-gluconic acid (25DKG) to 2-keto-L-gulonic acid (2KLG) and could be involved in ketogluconate metabolism. However, the specific activity of the enzyme toward 2,5-diketo-D-gluconate was reported to be almost 400-fold lower than its activity toward methylglyoxal. Can catalyze in vitro the NADPH-dependent reduction of furfural, a natural product of lignocellulosic decomposition, to the less toxic product, furfuryl alcohol. However, it is unlikely that furfural is a physiological substrate. The sequence is that of Methylglyoxal reductase DkgA from Escherichia coli (strain K12).